The chain runs to 658 residues: Glycogen debranching enzyme (658 aa).

Catalysis depends on Asp-336, which acts as the Nucleophile. Glu-371 (proton donor) is an active-site residue. Residues 459 to 484 are disordered; that stretch reads EANGEENRDGTNSNYSDNHGKEGLGG.

The protein belongs to the glycosyl hydrolase 13 family.

It carries out the reaction Hydrolysis of (1-&gt;6)-alpha-D-glucosidic linkages to branches with degrees of polymerization of three or four glucose residues in limit dextrin.. It participates in glycan degradation; glycogen degradation. Functionally, removes maltotriose and maltotetraose chains that are attached by 1,6-alpha-linkage to the limit dextrin main chain, generating a debranched limit dextrin. This chain is Glycogen debranching enzyme, found in Salmonella choleraesuis (strain SC-B67).